Consider the following 280-residue polypeptide: Polyamine aminopropyltransferase (280 aa).

One can recognise a PABS domain in the interval 3–237 (DVYFMERDPY…YWWSFSVGSK (235 aa)). Q33 lines the S-methyl-5'-thioadenosine pocket. Spermidine-binding residues include H64 and D88. Residues D108 and 139 to 140 (DG) contribute to the S-methyl-5'-thioadenosine site. D157 acts as the Proton acceptor in catalysis. 157 to 160 (DSTD) lines the spermidine pocket.

The protein belongs to the spermidine/spermine synthase family. As to quaternary structure, homodimer or homotetramer.

It localises to the cytoplasm. The catalysed reaction is S-adenosyl 3-(methylsulfanyl)propylamine + putrescine = S-methyl-5'-thioadenosine + spermidine + H(+). It participates in amine and polyamine biosynthesis; spermidine biosynthesis; spermidine from putrescine: step 1/1. Its function is as follows. Catalyzes the irreversible transfer of a propylamine group from the amino donor S-adenosylmethioninamine (decarboxy-AdoMet) to putrescine (1,4-diaminobutane) to yield spermidine. The polypeptide is Polyamine aminopropyltransferase (Hydrogenobaculum sp. (strain Y04AAS1)).